The sequence spans 92 residues: C-C motif chemokine 4 (92 aa).

Residues 1–23 (MKLCVTVLSLLVLMAAFCSPALS) form the signal peptide. 2 disulfide bridges follow: cysteine 34–cysteine 58 and cysteine 35–cysteine 74.

The protein belongs to the intercrine beta (chemokine CC) family. In terms of assembly, homodimer. Interacts with CCR5.

The protein localises to the secreted. Functionally, monokine with inflammatory and chemokinetic properties. The protein is C-C motif chemokine 4 (CCL4) of Bos taurus (Bovine).